Consider the following 426-residue polypeptide: Target of rapamycin complex 2 subunit AVO2 (426 aa).

5 ANK repeats span residues 4 to 33 (EPSV…DLLT), 39 to 68 (NGWS…DKHE), 74 to 104 (KGNT…FINH), 108 to 137 (NGRA…DLWV), and 141 to 171 (NGDT…SLDD). The disordered stretch occupies residues 259 to 302 (STHTTSGNGGNRRSSITNPVFNPRKPTLSTDSFSSSSNSSSRLR). Residues 260-278 (THTTSGNGGNRRSSITNPV) show a composition bias toward polar residues. Low complexity predominate over residues 285–302 (TLSTDSFSSSSNSSSRLR). Ser-315 and Ser-350 each carry phosphoserine. The segment covering 350–359 (SNDNVRGDSQ) has biased composition (polar residues). The tract at residues 350 to 392 (SNDNVRGDSQTATINDDGGGGNGGDATIGMGLRKDPDDENENK) is disordered. Positions 366-375 (DGGGGNGGDA) are enriched in gly residues. Over residues 381–392 (LRKDPDDENENK) the composition is skewed to basic and acidic residues.

The target of rapamycin complex 2 (TORC2) is composed of at least AVO1, AVO2, BIT61, LST8, TOR2 and TSC11. TORC2 forms a homodimer. Contrary to TORC1, TORC2 does not bind to and is not sensitive to FKBP-rapamycin. AVO2 is peripherally associated to AVO1 and TSC11.

Its subcellular location is the cell membrane. It localises to the vacuole membrane. Component of TORC2, which regulates cell cycle-dependent polarization of the actin-cytoskeleton and cell wall integrity. TORC2 controls polarity of the actin cytoskeleton, which is required for orienting the secretory pathway toward discrete growth sites, via the RHO1/PKC1/MAPK cell integrity pathway. The polypeptide is Target of rapamycin complex 2 subunit AVO2 (AVO2) (Saccharomyces cerevisiae (strain ATCC 204508 / S288c) (Baker's yeast)).